The primary structure comprises 98 residues: Integration host factor subunit alpha (98 aa).

Residues 51 to 71 are disordered; sequence NFDLRDKNERPGRNPKTGEDI. Basic and acidic residues predominate over residues 53–69; sequence DLRDKNERPGRNPKTGE.

Belongs to the bacterial histone-like protein family. Heterodimer of an alpha and a beta chain.

Its function is as follows. This protein is one of the two subunits of integration host factor, a specific DNA-binding protein that functions in genetic recombination as well as in transcriptional and translational control. This chain is Integration host factor subunit alpha, found in Vibrio parahaemolyticus serotype O3:K6 (strain RIMD 2210633).